The sequence spans 317 residues: MDLAYLPSPSTGVLHLGPIPLRAYAFCIILGVFAAVWLGNRRWVARGGKQGVIADVTLWAVPFGLVGGRLYHVFTSPDAYFGERGEPVRALYVWEGGLGIWGAIALGAVGAWIGCRRHRIPLPAFADAVAPGIVLAQAIGRWGNWFNQELYGRPTTLPWGLEIDRAHRPAGTLDIATYHPTFLYESLWNIGVAALILWAAKRFPLGHGRTFALYVAAYTVGRFGTEYLRIDEAHTFLGLRLNNWTSVLVFLGAVACLVVSAHRHPGIENVARLQGAGADGRTDDPRPADASVGLASGPPGNSTPRRATESWNVRNRS.

The next 4 membrane-spanning stretches (helical) occupy residues 19–39, 51–71, 93–113, and 120–140; these read IPLRAYAFCIILGVFAAVWLG, GVIADVTLWAVPFGLVGGRLY, VWEGGLGIWGAIALGAVGAWI, and IPLPAFADAVAPGIVLAQAIG. R141 lines the a 1,2-diacyl-sn-glycero-3-phospho-(1'-sn-glycerol) pocket. 3 consecutive transmembrane segments (helical) span residues 180–200, 211–230, and 241–261; these read PTFLYESLWNIGVAALILWAA, FALYVAAYTVGRFGTEYLRI, and LNNWTSVLVFLGAVACLVVSA. A disordered region spans residues 275-317; the sequence is GAGADGRTDDPRPADASVGLASGPPGNSTPRRATESWNVRNRS. Positions 299–317 are enriched in polar residues; the sequence is PGNSTPRRATESWNVRNRS.

This sequence belongs to the Lgt family.

It is found in the cell membrane. It catalyses the reaction L-cysteinyl-[prolipoprotein] + a 1,2-diacyl-sn-glycero-3-phospho-(1'-sn-glycerol) = an S-1,2-diacyl-sn-glyceryl-L-cysteinyl-[prolipoprotein] + sn-glycerol 1-phosphate + H(+). Its pathway is protein modification; lipoprotein biosynthesis (diacylglyceryl transfer). Its function is as follows. Catalyzes the transfer of the diacylglyceryl group from phosphatidylglycerol to the sulfhydryl group of the N-terminal cysteine of a prolipoprotein, the first step in the formation of mature lipoproteins. In Streptomyces coelicolor (strain ATCC BAA-471 / A3(2) / M145), this protein is Phosphatidylglycerol--prolipoprotein diacylglyceryl transferase 2.